Reading from the N-terminus, the 145-residue chain is UPF0735 ACT domain-containing protein CPE1414 (145 aa).

The ACT domain maps to 69-144 (IFNMVVTHEK…GVEKVEFVAM (76 aa)).

This sequence belongs to the UPF0735 family.

The protein is UPF0735 ACT domain-containing protein CPE1414 of Clostridium perfringens (strain 13 / Type A).